The following is a 175-amino-acid chain: Enhancer of mRNA-decapping protein 1 (175 aa).

The span at Met1–Lys27 shows a compositional bias: polar residues. Disordered regions lie at residues Met1 to Thr113 and Gly155 to Leu175. Ser2 is modified (N-acetylserine). Residues Ala35–Asn47 show a composition bias toward low complexity. Residues Leu58–Asn77 are compositionally biased toward polar residues. Ser82 carries the phosphoserine modification. Over residues Asn100–Thr113 the composition is skewed to basic and acidic residues.

This sequence belongs to the EDC family.

It localises to the cytoplasm. Its function is as follows. mRNA-binding protein which stimulates mRNA decapping by DCP1 and DCP2. Involved in the regulation of expression of multiple genes involved in glycolysis and gluconeogenesis. The protein is Enhancer of mRNA-decapping protein 1 (EDC1) of Saccharomyces cerevisiae (strain ATCC 204508 / S288c) (Baker's yeast).